Consider the following 293-residue polypeptide: tRNA pseudouridine synthase B (293 aa).

The active-site Nucleophile is the Asp-38.

This sequence belongs to the pseudouridine synthase TruB family. Type 1 subfamily.

The catalysed reaction is uridine(55) in tRNA = pseudouridine(55) in tRNA. Responsible for synthesis of pseudouridine from uracil-55 in the psi GC loop of transfer RNAs. The protein is tRNA pseudouridine synthase B of Nostoc sp. (strain PCC 7120 / SAG 25.82 / UTEX 2576).